Reading from the N-terminus, the 276-residue chain is HTH-type transcriptional activator RhaR (276 aa).

The HTH araC/xylS-type domain occupies 174-272 (ESLFSALNQS…SCTPTEYRSR (99 aa)). DNA-binding regions (H-T-H motif) lie at residues 191 to 212 (ADFCRQHQLAVSSVRRIFKQQT) and 239 to 262 (VANIAIRCGYSDSNYFSSVFGKTF).

In terms of assembly, binds DNA as a dimer.

The protein localises to the cytoplasm. Functionally, activates expression of the rhaSR operon in response to L-rhamnose. The sequence is that of HTH-type transcriptional activator RhaR from Mannheimia succiniciproducens (strain KCTC 0769BP / MBEL55E).